The chain runs to 303 residues: Dipeptide transport system permease protein DppB (303 aa).

7 consecutive transmembrane segments (helical) span residues 9 to 29 (LGLL…MMQV), 62 to 82 (YFIY…IYTN), 93 to 113 (LPVS…LGAL), 129 to 149 (IFGF…GTLI), 166 to 186 (GTFS…MAVV), 227 to 247 (IPML…SVLI), and 269 to 289 (FPVI…FILV). Residues 93–290 (LPVSMQLGTQ…VILMVFILVT (198 aa)) enclose the ABC transmembrane type-1 domain.

The protein belongs to the binding-protein-dependent transport system permease family. OppBC subfamily. The complex is composed of two ATP-binding proteins (DppD and DppF), two transmembrane proteins (DppB and DppC) and a solute-binding protein (DppA).

It is found in the cell membrane. In terms of biological role, part of the ABC transporter DppABCDF involved in dipeptide transport. Responsible for the translocation of the substrate across the membrane. The sequence is that of Dipeptide transport system permease protein DppB from Lactococcus lactis subsp. cremoris (strain MG1363).